The chain runs to 156 residues: Small ribosomal subunit protein uS7 (156 aa).

Belongs to the universal ribosomal protein uS7 family. Part of the 30S ribosomal subunit. Contacts proteins S9 and S11.

In terms of biological role, one of the primary rRNA binding proteins, it binds directly to 16S rRNA where it nucleates assembly of the head domain of the 30S subunit. Is located at the subunit interface close to the decoding center, probably blocks exit of the E-site tRNA. The sequence is that of Small ribosomal subunit protein uS7 from Clostridium botulinum (strain Alaska E43 / Type E3).